The sequence spans 1798 residues: U3 small nucleolar RNA-associated protein 10 (1798 aa).

The stretch at 583–620 (LDFQALLPFLLVTLTDPSERVRREAAAALAAVGSLYKK) is one HEAT 1 repeat. Transmembrane regions (helical) follow at residues 942 to 962 (IQSGMSYLLSLTLGSLLAIVN) and 998 to 1018 (ALLLVAGLSVIAPELVLHSVM). 4 HEAT repeats span residues 1042 to 1079 (QTIDQVVPALIQSLRDQKRDVVSGTSELLLSFTAAFEH), 1249 to 1286 (LTLVDFLDTIEVLLERPNDELRRKVLRLLEGRLRQNPE), 1293 to 1331 (IRVLDFLPTLVDIIRNSTDILLKHAAVACIDRIAEKYGK), and 1754 to 1791 (ALLPEMLPYISELMEDEDENVEREVRKWVKQIENVLGE).

It belongs to the HEATR1/UTP10 family. Component of the ribosomal small subunit (SSU) processome.

The protein localises to the nucleus. The protein resides in the nucleolus. Its subcellular location is the membrane. Functionally, involved in nucleolar processing of pre-18S ribosomal RNA. Involved in ribosome biosynthesis. The protein is U3 small nucleolar RNA-associated protein 10 of Aspergillus fumigatus (strain ATCC MYA-4609 / CBS 101355 / FGSC A1100 / Af293) (Neosartorya fumigata).